The primary structure comprises 641 residues: Glycerol metabolism operon regulatory protein (641 aa).

The segment at 1–318 is sensor domain; the sequence is MTTHTQDIGK…MRQLMTSQLG (318 aa). Residues 52-189 enclose the GAF domain; the sequence is ALLTIAQAAL…AIAREVGNSL (138 aa). One can recognise a PAS domain in the interval 203 to 265; sequence NQMYGLLESM…MLLRRAIKHA (63 aa). Residues 327–552 enclose the Sigma-54 factor interaction domain; that stretch reads MSTDDPETRR…LNSIIENIAI (226 aa). Residues 355-362 and 415-424 each bind ATP; these read GEEGVGKE and ANGGTLFLEK.

Transcriptional activator of the glycerol utilization dha operon. The sequence is that of Glycerol metabolism operon regulatory protein from Citrobacter freundii.